The following is a 591-amino-acid chain: Aspartate--tRNA ligase (591 aa).

E173 is an L-aspartate binding site. The interval 197-200 (QLFK) is aspartate. R219 is a binding site for L-aspartate. Residues 219 to 221 (RDE) and Q228 each bind ATP. An L-aspartate-binding site is contributed by H448. Residue E482 participates in ATP binding. R489 contacts L-aspartate. 534–537 (GLDR) lines the ATP pocket.

Belongs to the class-II aminoacyl-tRNA synthetase family. Type 1 subfamily. As to quaternary structure, homodimer.

It is found in the cytoplasm. The enzyme catalyses tRNA(Asp) + L-aspartate + ATP = L-aspartyl-tRNA(Asp) + AMP + diphosphate. Functionally, catalyzes the attachment of L-aspartate to tRNA(Asp) in a two-step reaction: L-aspartate is first activated by ATP to form Asp-AMP and then transferred to the acceptor end of tRNA(Asp). This chain is Aspartate--tRNA ligase, found in Shewanella sp. (strain MR-4).